We begin with the raw amino-acid sequence, 246 residues long: Ribonuclease 3 (246 aa).

The 130-residue stretch at 8 to 137 (ANRLKTRLGF…LLGAIYLDQG (130 aa)) folds into the RNase III domain. E50 is a Mg(2+) binding site. Residue D54 is part of the active site. 2 residues coordinate Mg(2+): D123 and E126. E126 is a catalytic residue. One can recognise a DRBM domain in the interval 164–233 (DYKTELQEIL…AKDAFQHLEG (70 aa)). Residues 212-246 (SGHSKKEAEQQAAKDAFQHLEGMGKSGHKSAGPIR) are disordered.

This sequence belongs to the ribonuclease III family. Homodimer. Requires Mg(2+) as cofactor.

It is found in the cytoplasm. It carries out the reaction Endonucleolytic cleavage to 5'-phosphomonoester.. Digests double-stranded RNA. Involved in the processing of primary rRNA transcript to yield the immediate precursors to the large and small rRNAs (23S and 16S). Processes some mRNAs, and tRNAs when they are encoded in the rRNA operon. Processes pre-crRNA and tracrRNA of type II CRISPR loci if present in the organism. This is Ribonuclease 3 from Desulforamulus reducens (strain ATCC BAA-1160 / DSM 100696 / MI-1) (Desulfotomaculum reducens).